The following is a 1165-amino-acid chain: Adhesion G-protein coupled receptor G6 (1165 aa).

A signal peptide spans 1–30; that stretch reads MMFDTLGKRCCPWRLKPSALLFLFVLCVTC. The Extracellular segment spans residues 31-832; sequence VPLSVCGCGS…ASQIDGRNTK (802 aa). A disulfide bridge links C41 with C67. The CUB domain occupies 41–149; the sequence is CRLVLSNPSG…KGFNASYIRV (109 aa). Ca(2+) is bound by residues E89 and D97. A disulfide bond links C94 and C111. N121 carries an N-linked (GlcNAc...) asparagine glycan. The Ca(2+) site is built by D134, S136, and I137. N-linked (GlcNAc...) asparagine glycosylation occurs at N143. Positions 154 to 356 constitute a Pentraxin (PTX) domain; it reads RNQKVILPQT…ALKAEGNLSC (203 aa). 2 disulfides stabilise this stretch: C186–C254 and C231–C277. 11 N-linked (GlcNAc...) asparagine glycosylation sites follow: N258, N314, N324, N353, N370, N410, N417, N424, N458, N462, and N478. Positions 446 to 807 are mediates interaction with laminin-2; the sequence is DKRLVLWALL…LDAGETICLC (362 aa). Cystine bridges form between C498–C533 and C521–C550. N-linked (GlcNAc...) asparagine glycans are attached at residues N536, N549, N563, N570, N665, N674, N720, N746, N781, and N788. A GAIN-B domain is found at 640–823; the sequence is PHVNIETQNL…GVLMDLPRSA (184 aa). 2 cysteine pairs are disulfide-bonded: C773/C805 and C792/C807. The interval 773 to 823 is GPS; sequence CAFWDMNKNKSFGGWNTSGCVAHSDLDAGETICLCSHFTHFGVLMDLPRSA. Positions 812-820 are stachel; sequence HFGVLMDLP. The chain crosses the membrane as a helical span at residues 833–853; it reads VLTFITYIGCGISAIFSAATL. The Cytoplasmic portion of the chain corresponds to 854-873; it reads LTYVAFEKLRRDYPSKILMN. The chain crosses the membrane as a helical span at residues 874–894; that stretch reads LSSALLFLNLIFLLDGWVTSF. Residues 895-899 lie on the Extracellular side of the membrane; that stretch reads GVAGL. The helical transmembrane segment at 900–920 threads the bilayer; the sequence is CTAVAALLHFFLLATFTWMGL. The Cytoplasmic segment spans residues 921 to 940; sequence EAIHMYIALVKVFNTYIHRY. Residues 941 to 961 traverse the membrane as a helical segment; the sequence is ILKFCIIGWGLPALVVSIILV. Over 962–994 the chain is Extracellular; it reads SRRQNEVYGKESYGKDQDDEFCWIQDPVVFYVS. The chain crosses the membrane as a helical span at residues 995-1015; sequence CAGYFGVMFFLNVAMFIVVMV. Residues 1016–1039 are Cytoplasmic-facing; the sequence is QICGRNGKRSNRTLREEVLRNLRS. A helical membrane pass occupies residues 1040–1060; that stretch reads VVSLTFLLGMTWGFAFFAWGP. Topologically, residues 1061 to 1062 are extracellular; that stretch reads LN. Residues 1063–1083 form a helical membrane-spanning segment; it reads IPFMYLFSIFNSLQGLFIFIF. N1073 lines the 17alpha-hydroxyprogesterone pocket. Topologically, residues 1084–1165 are cytoplasmic; the sequence is HCAMKENVQK…KRNSHSDNFS (82 aa). Low complexity predominate over residues 1126–1154; the sequence is NLGKSLSSSSIGSNSTYLTSKSKSSSTTY. Residues 1126-1165 are disordered; that stretch reads NLGKSLSSSSIGSNSTYLTSKSKSSSTTYFKRNSHSDNFS. 2 positions are modified to phosphoserine: S1135 and S1138.

Belongs to the G-protein coupled receptor 2 family. Adhesion G-protein coupled receptor (ADGR) subfamily. In terms of assembly, heterodimer of 2 chains generated by proteolytic processing; the large extracellular N-terminal fragment and the membrane-bound C-terminal fragment predominantly remain associated and non-covalently linked. Interacts with Laminin-2; this interaction stabilizes the receptor in an inactive state. Laminin-2 polymerization could facilitate ADGRG6-NTF removal, thereby exposing the tethered agonist to drive myelination. Interacts with PRNP. Interacts with ITGB1. Interacts with LRP1. Post-translationally, proteolytically cleaved into 2 conserved sites: one in the GPS region of the GAIN-B domain (S1 site) and the other in the middle of the extracellular domain (S2 site). The proteolytic cleavage at S1 site generates an extracellular subunit and a seven-transmembrane subunit. Furin is involved in the cleavage of the S2 site generating a soluble fragment. Processing at the GPS region occurred independent of and probably prior to the cleavage at the S2 site. Proteolytic cleavage is required for activation of the receptor. As to expression, expressed at high levels in the heart, somite and otic vesicle during embryogenesis and in adult lung.

Its subcellular location is the cell membrane. With respect to regulation, forms a heterodimer of 2 chains generated by proteolytic processing that remain associated through non-covalent interactions mediated by the GAIN-B domain. In the inactivated receptor, the Stachel sequence (also named stalk) is embedded in the GAIN-B domain, where it adopts a beta-strand conformation. On activation, the Stachel moves into the 7 transmembrane region and adopts a twisted hook-shaped configuration that forms contacts within the receptor, leading to coupling of a G-alpha protein, which activates signaling. The cleaved GAIN-B and N-terminal domains can then dissociate from the rest of the receptor. Adhesion G-protein coupled receptor (aGPCR) for steroid hormones, such as progesterone and 17alpha-hydroxyprogesterone (17OHP). Involved in many biological processes, such as myelination, sprouting angiogenesis, placenta, ear and cartilage development. Ligand binding causes a conformation change that triggers signaling via guanine nucleotide-binding proteins (G proteins) and modulates the activity of downstream effectors, such as adenylate cyclase. ADGRG6 is coupled to G(i) G alpha proteins and mediates inhibition of adenylate cyclase. Also able to couple to G(q) G proteins. Involved in myelination of the peripheral nervous system: required for differentiation of promyelinating Schwann cells and for normal myelination of axons. Also acts as a regulator of body length and bone mass. Acts as a regulator of blood-brain barrier formation in the central nervous system vie its association with LRP1 and ITGB1. This Mus musculus (Mouse) protein is Adhesion G-protein coupled receptor G6.